A 498-amino-acid chain; its full sequence is ATP synthase subunit beta, chloroplastic (498 aa).

Residue 172–179 participates in ATP binding; sequence GGAGVGKT.

This sequence belongs to the ATPase alpha/beta chains family. As to quaternary structure, F-type ATPases have 2 components, CF(1) - the catalytic core - and CF(0) - the membrane proton channel. CF(1) has five subunits: alpha(3), beta(3), gamma(1), delta(1), epsilon(1). CF(0) has four main subunits: a(1), b(1), b'(1) and c(9-12).

It localises to the plastid. Its subcellular location is the chloroplast thylakoid membrane. It catalyses the reaction ATP + H2O + 4 H(+)(in) = ADP + phosphate + 5 H(+)(out). Functionally, produces ATP from ADP in the presence of a proton gradient across the membrane. The catalytic sites are hosted primarily by the beta subunits. In Balaka seemannii, this protein is ATP synthase subunit beta, chloroplastic.